The chain runs to 253 residues: Adenylate kinase (253 aa).

Residue 15 to 20 coordinates ATP; sequence GSGKGT. The tract at residues 35 to 64 is NMP; that stretch reads SSGDLLRNAVSQNTPLGQEIKSYLDQGKLL. AMP is bound by residues S36, R41, 62-64, 103-106, and Q110; these read KLL and GFPR. The LID stretch occupies residues 143–176; that stretch reads SRYICPSCQGIYNKQQGFSRCPKCLVELTRRSDD. R144 contacts ATP. Residues C147 and C150 each contribute to the Zn(2+) site. Position 153-154 (153-154) interacts with ATP; the sequence is IY. Zn(2+) is bound by residues C163 and C166. Positions 173 and 184 each coordinate AMP. A212 is a binding site for ATP.

Belongs to the adenylate kinase family. As to quaternary structure, monomer.

It localises to the cytoplasm. It catalyses the reaction AMP + ATP = 2 ADP. The protein operates within purine metabolism; AMP biosynthesis via salvage pathway; AMP from ADP: step 1/1. In terms of biological role, catalyzes the reversible transfer of the terminal phosphate group between ATP and AMP. Plays an important role in cellular energy homeostasis and in adenine nucleotide metabolism. The sequence is that of Adenylate kinase from Chlamydia muridarum (strain MoPn / Nigg).